Consider the following 402-residue polypeptide: Protein kinase US3 homolog (402 aa).

Disordered regions lie at residues 1-21 and 46-88; these read MSSS…KVHD and FPDS…SPET. A Protein kinase domain is found at 102 to 386; it reads YNIVSSLSPG…AQDILMLPLF (285 aa). ATP-binding positions include 108-116 and K129; that span reads LSPGSEGYI. D218 acts as the Proton acceptor in catalysis.

It belongs to the protein kinase superfamily. Ser/Thr protein kinase family. Post-translationally, phosphorylated by UL13 homolog; this phosphorylation regulates subsequent phosphorylation of UL31 and UL34 homologs by US3. Autophosphorylated.

It localises to the host cytoplasm. The protein resides in the host nucleus. It carries out the reaction L-seryl-[protein] + ATP = O-phospho-L-seryl-[protein] + ADP + H(+). The catalysed reaction is L-threonyl-[protein] + ATP = O-phospho-L-threonyl-[protein] + ADP + H(+). Functionally, multifunctional serine/threonine kinase that plays a role in several processes including egress of virus particles from the nucleus, modulation of the actin cytoskeleton and inhibition of apoptosis. Phosphorylates UL31 and UL34 homologs, two critical regulators of capsid budding from nucleus to endoplasmic reticulum, thereby facilitating virion egress. Modulates and redistributes host components of the nuclear envelope, including LMNA, emerin/EMD and the nuclear matrix protein MATR3. Phosphorylates envelope glycoprotein B (gB), probably to direct it to the cell surface. Promotes virus intracellular spread by restructuring host cell cytoskeleton. Blocks host apoptosis to extend cell survival and allow efficient viral replication. Promotes viral gene expression by phosphorylating host HDAC2 to reduce viral genome silencing. The protein is Protein kinase US3 homolog (MDV092) of Gallus gallus (Chicken).